Here is a 497-residue protein sequence, read N- to C-terminus: Serine/threonine-protein phosphatase 2A 56 kDa regulatory subunit beta isoform (497 aa).

The span at 1 to 19 shows a compositional bias: low complexity; the sequence is METKLPPASTPTSPSSPGL. Disordered regions lie at residues 1–55 and 475–497; these read METK…YQSN and TQGAKEAPLQRLTPQVAASGGQS. A phosphoserine; by CLK2 mark is found at Ser32, Ser35, Ser44, Ser46, Ser47, and Ser48. Residues 34 to 45 show a composition bias toward basic residues; sequence RSLRRARPRRSH.

It belongs to the phosphatase 2A regulatory subunit B56 family. Component of the serine/threonine-protein phosphatase 2A complex (PP2A). This complex consists of a common heterodimeric core enzyme, composed of a 36 kDa catalytic subunit (subunit C) and a 65 kDa constant scaffold subunit (PR65 or subunit A), that associates with a variety of regulatory subunits. Proteins that associate with the core dimer include three families of regulatory subunits B (the R2/B/PR55/B55, R3/B''/PR72/PR130/PR59 and R5/B'/B56 families), the 48 kDa variable regulatory subunit, viral proteins, and cell signaling molecules. Interacts with SGO1. Interacts with AKT1. Interacts with CUL3 and KLHL15; this interaction leads to proteasomal degradation. In terms of processing, ubiquitinated by E3 CUL3-KLHL15 complex; this modification leads to proteasomal degradation. In terms of tissue distribution, highest expression in brain.

Its subcellular location is the cytoplasm. Functionally, as the regulatory component of the serine/threonine-protein phosphatase 2A (PP2A) holoenzyme, modulates substrate specificity, subcellular localization, and responsiveness to phosphorylation. The phosphorylated form mediates the interaction between PP2A and AKT1, leading to AKT1 dephosphorylation. The sequence is that of Serine/threonine-protein phosphatase 2A 56 kDa regulatory subunit beta isoform (PPP2R5B) from Homo sapiens (Human).